Here is an 86-residue protein sequence, read N- to C-terminus: Defensin-like protein 97 (86 aa).

The signal sequence occupies residues 1–27; it reads MGSLRVSTFAVAVVVCLSILLMSPTDG. 4 disulfide bridges follow: cysteine 31–cysteine 74, cysteine 38–cysteine 60, cysteine 44–cysteine 71, and cysteine 48–cysteine 73.

This sequence belongs to the DEFL family.

It is found in the secreted. This is Defensin-like protein 97 (LCR85) from Arabidopsis thaliana (Mouse-ear cress).